A 310-amino-acid polypeptide reads, in one-letter code: Protoheme IX farnesyltransferase (310 aa).

9 consecutive transmembrane segments (helical) span residues 21–43, 48–70, 95–115, 118–138, 147–167, 174–194, 220–240, 243–263, and 289–309; these read LLKP…VAPV, MIAL…LNMW, GEAL…LGLA, LFAA…YSMW, IVIG…VATG, LFMF…LALF, VLVY…TGIG, LYLA…VRIW, and LFLH…GLGG.

This sequence belongs to the UbiA prenyltransferase family. Protoheme IX farnesyltransferase subfamily. In terms of assembly, interacts with CtaA.

The protein resides in the cell inner membrane. The enzyme catalyses heme b + (2E,6E)-farnesyl diphosphate + H2O = Fe(II)-heme o + diphosphate. The protein operates within porphyrin-containing compound metabolism; heme O biosynthesis; heme O from protoheme: step 1/1. Its function is as follows. Converts heme B (protoheme IX) to heme O by substitution of the vinyl group on carbon 2 of heme B porphyrin ring with a hydroxyethyl farnesyl side group. This is Protoheme IX farnesyltransferase from Cereibacter sphaeroides (strain KD131 / KCTC 12085) (Rhodobacter sphaeroides).